The primary structure comprises 131 residues: Small ribosomal subunit protein uS8 (131 aa).

The protein belongs to the universal ribosomal protein uS8 family. Part of the 30S ribosomal subunit. Contacts proteins S5 and S12.

In terms of biological role, one of the primary rRNA binding proteins, it binds directly to 16S rRNA central domain where it helps coordinate assembly of the platform of the 30S subunit. In Prosthecochloris aestuarii (strain DSM 271 / SK 413), this protein is Small ribosomal subunit protein uS8.